Reading from the N-terminus, the 183-residue chain is Dual-action ribosomal maturation protein DarP (183 aa).

Positions 1–27 (MSSHSQEPVGEENFDDSEYDRPSKSQV) are disordered. The segment covering 9 to 18 (VGEENFDDSE) has biased composition (acidic residues).

Belongs to the DarP family.

The protein localises to the cytoplasm. Member of a network of 50S ribosomal subunit biogenesis factors which assembles along the 30S-50S interface, preventing incorrect 23S rRNA structures from forming. Promotes peptidyl transferase center (PTC) maturation. The sequence is that of Dual-action ribosomal maturation protein DarP from Bordetella parapertussis (strain 12822 / ATCC BAA-587 / NCTC 13253).